The sequence spans 194 residues: uncharacterized protein (194 aa).

An Exonuclease domain is found at 20 to 185; sequence RIFIDTETTG…ADCRMTLGII (166 aa).

This is an uncharacterized protein from Escherichia coli (Bacteriophage 186).